A 131-amino-acid chain; its full sequence is D-ribose pyranase (131 aa).

His20 (proton donor) is an active-site residue. Residues Asp28, His98, and 120–122 each bind substrate; that span reads YAN.

This sequence belongs to the RbsD / FucU family. RbsD subfamily. As to quaternary structure, homodecamer.

The protein resides in the cytoplasm. The catalysed reaction is beta-D-ribopyranose = beta-D-ribofuranose. It participates in carbohydrate metabolism; D-ribose degradation; D-ribose 5-phosphate from beta-D-ribopyranose: step 1/2. In terms of biological role, catalyzes the interconversion of beta-pyran and beta-furan forms of D-ribose. In Clostridium perfringens (strain ATCC 13124 / DSM 756 / JCM 1290 / NCIMB 6125 / NCTC 8237 / Type A), this protein is D-ribose pyranase.